Consider the following 370-residue polypeptide: Quinolinate synthase (370 aa).

Positions 62 and 83 each coordinate iminosuccinate. Cys-128 contacts [4Fe-4S] cluster. Iminosuccinate contacts are provided by residues 154–156 and Ser-171; that span reads YAN. Cys-215 provides a ligand contact to [4Fe-4S] cluster. Residues 241-243 and Thr-258 contribute to the iminosuccinate site; that span reads HPE. Cys-312 serves as a coordination point for [4Fe-4S] cluster.

The protein belongs to the quinolinate synthase family. Type 1 subfamily. It depends on [4Fe-4S] cluster as a cofactor.

Its subcellular location is the cytoplasm. The catalysed reaction is iminosuccinate + dihydroxyacetone phosphate = quinolinate + phosphate + 2 H2O + H(+). It participates in cofactor biosynthesis; NAD(+) biosynthesis; quinolinate from iminoaspartate: step 1/1. In terms of biological role, catalyzes the condensation of iminoaspartate with dihydroxyacetone phosphate to form quinolinate. This chain is Quinolinate synthase, found in Neisseria meningitidis serogroup A / serotype 4A (strain DSM 15465 / Z2491).